Here is a 301-residue protein sequence, read N- to C-terminus: MPWISSHMNSSSVLDFFPHKTMAVDIAMKFYLRSPPLRRDRVECRIARKSNEPLRPCIQTTNKTLLSELSNQENKVKKRVSFADSRGLALTMVKVYSDFDDELEIPFNISELIDNIVNLTTVEKERFFLDFVQPSADYLDFRNRLQAESVCLENCMLKDKALVGTVKVKNLAFQKSVKIRMTCDSWQTYKDYDCLYVKDTYAGSDKDTFSFDVSLPEGIQSSASIEFAVCFECEGRIFWDSNKGLNYRIVRQDHRIPSDFESRHYDPVCLSVDQYGSPRCSYGIFPELQTYSGFDKLGPYY.

The PP1-binding motif signature appears at 79–82 (RVSF). One can recognise a CBM21 domain in the interval 142–250 (RNRLQAESVC…SNKGLNYRIV (109 aa)).

In terms of assembly, interacts with glycogen, PPP1CC catalytic subunit of PP1 and PYGL. Associates with glycogen particles. Forms complexes with debranching enzyme, glycogen phosphorylase, glycogen synthase and phosphorylase kinase which is necessary for its regulation of PP1 activity.

Functionally, acts as a glycogen-targeting subunit for phosphatase PP1. Facilitates interaction of the PP1 with enzymes of the glycogen metabolism and regulates its activity. Suppresses the rate at which PP1 dephosphorylates (inactivates) glycogen phosphorylase and enhances the rate at which it activates glycogen synthase and therefore limits glycogen breakdown. The chain is Protein phosphatase 1 regulatory subunit 3B (ppp1r3b) from Xenopus tropicalis (Western clawed frog).